Consider the following 172-residue polypeptide: Photosystem I assembly protein Ycf3 (172 aa).

TPR repeat units follow at residues 35–70, 74–107, and 122–155; these read AFTY…EIDP, SYIL…NPFL, and GEQA…TPGN.

It belongs to the Ycf3 family.

It localises to the plastid. It is found in the chloroplast thylakoid membrane. In terms of biological role, essential for the assembly of the photosystem I (PSI) complex. May act as a chaperone-like factor to guide the assembly of the PSI subunits. In Sorghum bicolor (Sorghum), this protein is Photosystem I assembly protein Ycf3.